Reading from the N-terminus, the 817-residue chain is Probable beta-glucosidase G (817 aa).

Residues M1–S20 form the signal peptide. 4 N-linked (GlcNAc...) asparagine glycosylation sites follow: N40, N58, N229, and N276. The active site involves D304. Residues N343, N350, N402, N507, N563, N584, N623, N662, N679, and N715 are each glycosylated (N-linked (GlcNAc...) asparagine).

The protein belongs to the glycosyl hydrolase 3 family.

It localises to the secreted. It catalyses the reaction Hydrolysis of terminal, non-reducing beta-D-glucosyl residues with release of beta-D-glucose.. The protein operates within glycan metabolism; cellulose degradation. Beta-glucosidases are one of a number of cellulolytic enzymes involved in the degradation of cellulosic biomass. Catalyzes the last step releasing glucose from the inhibitory cellobiose. This is Probable beta-glucosidase G (bglG) from Neosartorya fischeri (strain ATCC 1020 / DSM 3700 / CBS 544.65 / FGSC A1164 / JCM 1740 / NRRL 181 / WB 181) (Aspergillus fischerianus).